The sequence spans 469 residues: Glutamine synthetase (469 aa).

Residues 14 to 99 enclose the GS beta-grasp domain; that stretch reads NDVKFVDLRF…FCDILDPVSG (86 aa). The GS catalytic domain occupies 106–469; sequence PRGTAKKAEA…PVEFDMYYSV (364 aa). Mg(2+) contacts are provided by Glu-131 and Glu-133. Residue Glu-209 coordinates ATP. Residues Glu-214 and Glu-221 each contribute to the Mg(2+) site. Residues 265 to 266 and Gly-266 contribute to the L-glutamate site; that span reads NG. Position 270 (His-270) interacts with Mg(2+). ATP-binding positions include 272–274 and Ser-274; that span reads HLS. Positions 322, 328, and 340 each coordinate L-glutamate. Positions 340, 345, and 353 each coordinate ATP. Residue Glu-358 participates in Mg(2+) binding. An L-glutamate-binding site is contributed by Arg-360. Tyr-398 is subject to O-AMP-tyrosine.

This sequence belongs to the glutamine synthetase family. Oligomer of 12 subunits arranged in the form of two hexameric ring. The cofactor is Mg(2+).

Its subcellular location is the cytoplasm. The catalysed reaction is L-glutamate + NH4(+) + ATP = L-glutamine + ADP + phosphate + H(+). The activity of this enzyme could be controlled by adenylation under conditions of abundant glutamine. Functionally, catalyzes the ATP-dependent biosynthesis of glutamine from glutamate and ammonia. The sequence is that of Glutamine synthetase from Rhizobium meliloti (strain 1021) (Ensifer meliloti).